The chain runs to 203 residues: Probable flagellin 1 (203 aa).

Residues 1 to 11 constitute a propeptide that is removed on maturation; sequence MGMRFLKNEKG.

It belongs to the archaeal flagellin family.

It is found in the archaeal flagellum. Flagellin is the subunit protein which polymerizes to form the filaments of archaeal flagella. In Archaeoglobus fulgidus (strain ATCC 49558 / DSM 4304 / JCM 9628 / NBRC 100126 / VC-16), this protein is Probable flagellin 1 (flaB1).